Consider the following 172-residue polypeptide: C-phycocyanin beta subunit (172 aa).

Asn-72 is subject to N4-methylasparagine. (2R,3E)-phycocyanobilin is bound by residues Cys-82 and Cys-153.

The protein belongs to the phycobiliprotein family. The alpha and beta subunits exhibit high affinity for one another and form heterodimers. These heterodimers form heterohexamers of 3 alpha and 3 beta subunits which, in turn, aggregate into a heterododecamer consisting of 2 heterohexamers. Contains two covalently linked bilin chromophores.

Its subcellular location is the cellular thylakoid membrane. Light-harvesting photosynthetic bile pigment-protein from the phycobiliprotein complex (phycobilisome, PBS). Phycocyanin is the major phycobiliprotein in the PBS rod. In Arthrospira platensis (Spirulina platensis), this protein is C-phycocyanin beta subunit (cpcB).